Consider the following 69-residue polypeptide: Large ribosomal subunit protein uL29 (69 aa).

Belongs to the universal ribosomal protein uL29 family.

The sequence is that of Large ribosomal subunit protein uL29 from Treponema denticola (strain ATCC 35405 / DSM 14222 / CIP 103919 / JCM 8153 / KCTC 15104).